The primary structure comprises 82 residues: uncharacterized protein (82 aa).

3 helical membrane passes run 1–21 (MSAS…SVST), 22–42 (VLLG…LAAF), and 62–82 (WRLL…LTLL).

The protein resides in the cell membrane. This is an uncharacterized protein from Stutzerimonas stutzeri (Pseudomonas stutzeri).